The primary structure comprises 152 residues: Ribosome maturation factor RimP (152 aa).

The protein belongs to the RimP family.

The protein localises to the cytoplasm. Required for maturation of 30S ribosomal subunits. The sequence is that of Ribosome maturation factor RimP from Proteus mirabilis (strain HI4320).